The sequence spans 358 residues: Alanine racemase (358 aa).

Lysine 34 acts as the Proton acceptor; specific for D-alanine in catalysis. At lysine 34 the chain carries N6-(pyridoxal phosphate)lysine. Arginine 130 contributes to the substrate binding site. Tyrosine 254 (proton acceptor; specific for L-alanine) is an active-site residue. Substrate is bound at residue methionine 302.

This sequence belongs to the alanine racemase family. It depends on pyridoxal 5'-phosphate as a cofactor.

It catalyses the reaction L-alanine = D-alanine. The protein operates within amino-acid biosynthesis; D-alanine biosynthesis; D-alanine from L-alanine: step 1/1. Catalyzes the interconversion of L-alanine and D-alanine. May also act on other amino acids. This Stutzerimonas stutzeri (strain A1501) (Pseudomonas stutzeri) protein is Alanine racemase (alr).